We begin with the raw amino-acid sequence, 636 residues long: Threonine--tRNA ligase (636 aa).

One can recognise a TGS domain in the interval 1–59 (MPIITLPDGTKKIFEQVVSVEQVAKSMGLVKAALAGEVDGELVSTSFLIKTDANLTIIT). The catalytic stretch occupies residues 240–531 (DHRKIGKTQD…LIEHYEGAYP (292 aa)). Residues C331, H382, and H508 each contribute to the Zn(2+) site.

The protein belongs to the class-II aminoacyl-tRNA synthetase family. As to quaternary structure, homodimer. It depends on Zn(2+) as a cofactor.

It is found in the cytoplasm. The catalysed reaction is tRNA(Thr) + L-threonine + ATP = L-threonyl-tRNA(Thr) + AMP + diphosphate + H(+). Its function is as follows. Catalyzes the attachment of threonine to tRNA(Thr) in a two-step reaction: L-threonine is first activated by ATP to form Thr-AMP and then transferred to the acceptor end of tRNA(Thr). Also edits incorrectly charged L-seryl-tRNA(Thr). The chain is Threonine--tRNA ligase from Vesicomyosocius okutanii subsp. Calyptogena okutanii (strain HA).